Consider the following 147-residue polypeptide: 3-hydroxyacyl-[acyl-carrier-protein] dehydratase FabZ (147 aa).

Residue His-53 is part of the active site.

The protein belongs to the thioester dehydratase family. FabZ subfamily.

The protein localises to the cytoplasm. It catalyses the reaction a (3R)-hydroxyacyl-[ACP] = a (2E)-enoyl-[ACP] + H2O. In terms of biological role, involved in unsaturated fatty acids biosynthesis. Catalyzes the dehydration of short chain beta-hydroxyacyl-ACPs and long chain saturated and unsaturated beta-hydroxyacyl-ACPs. This Synechococcus sp. (strain WH7803) protein is 3-hydroxyacyl-[acyl-carrier-protein] dehydratase FabZ.